The following is a 246-amino-acid chain: Hydroxyacylglutathione hydrolase (246 aa).

His-58, His-60, Asp-62, His-63, His-117, Asp-137, and His-175 together coordinate Zn(2+).

It belongs to the metallo-beta-lactamase superfamily. Glyoxalase II family. In terms of assembly, monomer. It depends on Zn(2+) as a cofactor.

The enzyme catalyses an S-(2-hydroxyacyl)glutathione + H2O = a 2-hydroxy carboxylate + glutathione + H(+). It participates in secondary metabolite metabolism; methylglyoxal degradation; (R)-lactate from methylglyoxal: step 2/2. In terms of biological role, thiolesterase that catalyzes the hydrolysis of S-D-lactoyl-glutathione to form glutathione and D-lactic acid. This is Hydroxyacylglutathione hydrolase from Prochlorococcus marinus (strain MIT 9301).